We begin with the raw amino-acid sequence, 202 residues long: MKKIGVFGGTFDPIHIGHIYIAYEAYKILELDEVIFMPAGNPPHKKWKDITDEIIRYEMVKKAIEPYSFFSINNYEIEKKGLSFTYETLRYLHESFKEVELYFITGADCLVNLNSWKNINEIFKFSNLVVFNRPGFDKNNLLKRKEEFDREYCTNIVYLDLLNIEISSTLIRERVRQSLEVKFFLPPGVVDIIDKYNLYRRE.

This sequence belongs to the NadD family.

It catalyses the reaction nicotinate beta-D-ribonucleotide + ATP + H(+) = deamido-NAD(+) + diphosphate. Its pathway is cofactor biosynthesis; NAD(+) biosynthesis; deamido-NAD(+) from nicotinate D-ribonucleotide: step 1/1. Functionally, catalyzes the reversible adenylation of nicotinate mononucleotide (NaMN) to nicotinic acid adenine dinucleotide (NaAD). The polypeptide is Probable nicotinate-nucleotide adenylyltransferase (Clostridium perfringens (strain SM101 / Type A)).